Consider the following 365-residue polypeptide: tRNA/tmRNA (uracil-C(5))-methyltransferase (365 aa).

5 residues coordinate S-adenosyl-L-methionine: glutamine 189, tyrosine 217, asparagine 222, glutamate 238, and aspartate 298. The Nucleophile role is filled by cysteine 323. The active-site Proton acceptor is the glutamate 357.

The protein belongs to the class I-like SAM-binding methyltransferase superfamily. RNA M5U methyltransferase family. TrmA subfamily.

The enzyme catalyses uridine(54) in tRNA + S-adenosyl-L-methionine = 5-methyluridine(54) in tRNA + S-adenosyl-L-homocysteine + H(+). It carries out the reaction uridine(341) in tmRNA + S-adenosyl-L-methionine = 5-methyluridine(341) in tmRNA + S-adenosyl-L-homocysteine + H(+). Its function is as follows. Dual-specificity methyltransferase that catalyzes the formation of 5-methyluridine at position 54 (m5U54) in all tRNAs, and that of position 341 (m5U341) in tmRNA (transfer-mRNA). In Shewanella frigidimarina (strain NCIMB 400), this protein is tRNA/tmRNA (uracil-C(5))-methyltransferase.